Reading from the N-terminus, the 1299-residue chain is Probable membrane antigen 75 (1299 aa).

It is found in the virion tegument. In Saimiriine herpesvirus 2 (strain 11) (SaHV-2), this protein is Probable membrane antigen 75 (75).